A 340-amino-acid polypeptide reads, in one-letter code: Erlin-2 (340 aa).

Residues 1–3 (MAQ) are Cytoplasmic-facing. A helical membrane pass occupies residues 4 to 24 (LGAVVAVASSFFCASLFSAVH). Over 25–340 (KIEEGHIGVY…EPLEAPTKEN (316 aa)) the chain is Lumenal. Asparagine 106 carries N-linked (GlcNAc...) asparagine glycosylation. Positions 177–309 (EAIRRNYELM…DIPNMFMDSA (133 aa)) are interaction with ERLIN1. At lysine 267 the chain carries N6-acetyllysine.

It belongs to the band 7/mec-2 family. As to quaternary structure, forms a heteromeric complex with ERLIN1. In complex with ERLIN1, interacts with RNF170. Interacts with activated ITPR1, independently of the degree of ITPR1 polyubiquitination. Interacts with SCAP, INSIG1, SREBF1 and SREBF2 under cholesterol sufficiency conditions; indicative for an association with the SCAP-SREBP-INSIG complex. Probably part of an AMFR/gp78 and INSIG1-containing ubiquitin ligase complex involved in ERAD of HMGCR. Interacts with TMUB1; TMUB1 bridges the association with AMFR. Interacts with SYVN1 and RNF139. Interacts with TMEM259. Interacts with TMEM41B. In terms of processing, deubiquitinated by USP25; leading to stabilization.

It localises to the endoplasmic reticulum membrane. In terms of biological role, component of the ERLIN1/ERLIN2 complex which mediates the endoplasmic reticulum-associated degradation (ERAD) of inositol 1,4,5-trisphosphate receptors (IP3Rs) such as ITPR1. Promotes sterol-accelerated ERAD of HMGCR probably implicating an AMFR/gp78-containing ubiquitin ligase complex. Involved in regulation of cellular cholesterol homeostasis by regulation the SREBP signaling pathway. May promote ER retention of the SCAP-SREBF complex. The chain is Erlin-2 (Erlin2) from Mus musculus (Mouse).